A 359-amino-acid chain; its full sequence is Nicotinate-nucleotide--dimethylbenzimidazole phosphoribosyltransferase (359 aa).

Glutamate 318 serves as the catalytic Proton acceptor.

Belongs to the CobT family. Homodimer.

The catalysed reaction is 5,6-dimethylbenzimidazole + nicotinate beta-D-ribonucleotide = alpha-ribazole 5'-phosphate + nicotinate + H(+). The protein operates within nucleoside biosynthesis; alpha-ribazole biosynthesis; alpha-ribazole from 5,6-dimethylbenzimidazole: step 1/2. Catalyzes the synthesis of alpha-ribazole-5'-phosphate from nicotinate mononucleotide (NAMN) and 5,6-dimethylbenzimidazole (DMB). This chain is Nicotinate-nucleotide--dimethylbenzimidazole phosphoribosyltransferase, found in Escherichia coli O9:H4 (strain HS).